Here is a 110-residue protein sequence, read N- to C-terminus: Endoribonuclease SymE (110 aa).

One can recognise a SpoVT-AbrB domain in the interval 29–74 (SRYPDYTRIPALTMKGQWLEAAGFATGTEVDVRVMNGCIVLTAQQP).

Belongs to the SymE family.

The protein resides in the cytoplasm. In terms of biological role, involved in the degradation and recycling of damaged RNA. It is itself a target for degradation by the ATP-dependent protease Lon. This Salmonella heidelberg (strain SL476) protein is Endoribonuclease SymE.